The following is a 344-amino-acid chain: Transcription factor HHO3 (344 aa).

2 disordered regions span residues 90 to 122 (KWSSASSDETDKDEEAEKTEMMTNENNDGDKKK) and 156 to 212 (AFQP…KQRR). The segment covering 97–106 (DETDKDEEAE) has biased composition (acidic residues). Positions 178–188 (TPTSTTTTSST) are enriched in low complexity. In terms of domain architecture, HTH myb-type spans 206 to 266 (SNRKQRRCWS…HLQKYRLHTR (61 aa)). A DNA-binding region (H-T-H motif) is located at residues 237–262 (PKQIRDLMKVDGLTNDEVKSHLQKYR). A disordered region spans residues 306-344 (PVATQPPQSSTSGERSNRGCKSPATSSTTTHTPHLLPLS). Residues 310–319 (QPPQSSTSGE) show a composition bias toward polar residues. A compositionally biased stretch (low complexity) spans 330–344 (TSSTTTHTPHLLPLS).

It is found in the nucleus. Probable transcription factor involved in phosphate signaling in roots. The chain is Transcription factor HHO3 from Arabidopsis thaliana (Mouse-ear cress).